A 239-amino-acid polypeptide reads, in one-letter code: Tetraspanin-9 (239 aa).

Residues 1–13 (MARGCLCCLKYMM) lie on the Cytoplasmic side of the membrane. The chain crosses the membrane as a helical span at residues 14 to 34 (FLFNLIFWLCGCGLLGVGIWL). Over 35-55 (SVSQGNFATFSPSFPSLSAAN) the chain is Extracellular. The helical transmembrane segment at 56 to 76 (LVIAIGTIVMVTGFLGCLGAI) threads the bilayer. Over 77-85 (KENKCLLLS) the chain is Cytoplasmic. A helical membrane pass occupies residues 86 to 106 (FFIILLIILLAELILLILFFV). The Extracellular portion of the chain corresponds to 107–203 (YMDKVNENAK…VKMWFDDNKH (97 aa)). Asn180 carries N-linked (GlcNAc...) asparagine glycosylation. A helical transmembrane segment spans residues 204-224 (VLGTIGMCILIIQILGMAFSM). The Cytoplasmic portion of the chain corresponds to 225–239 (TLFQQIHRTGKKYDA).

It belongs to the tetraspanin (TM4SF) family.

The protein resides in the membrane. This Xenopus tropicalis (Western clawed frog) protein is Tetraspanin-9 (tspan9).